Reading from the N-terminus, the 201-residue chain is MEQLTARQTEVLQIITRHLETCGYPPTLREIAAKLGISGTLGVMKHLEALEKKGYLRRQEGSTRGITLCNQNQATSLPIVGVVRAGLLHPAIQDIEGHFAIDRSQLASGGAFFLRVKGDSMIHAHIVEGDLALVRPQPDASNRDIVVAMVEGEATLKRFYREADRIRLQPENPNYEPIIIQKGEQEVSIVGKVVGIYRQME.

Positions 28–48 (LREIAAKLGISGTLGVMKHLE) form a DNA-binding region, H-T-H motif. Active-site for autocatalytic cleavage activity residues include S120 and K157.

This sequence belongs to the peptidase S24 family. In terms of assembly, homodimer.

The enzyme catalyses Hydrolysis of Ala-|-Gly bond in repressor LexA.. In terms of biological role, represses a number of genes involved in the response to DNA damage (SOS response), including recA and lexA. In the presence of single-stranded DNA, RecA interacts with LexA causing an autocatalytic cleavage which disrupts the DNA-binding part of LexA, leading to derepression of the SOS regulon and eventually DNA repair. In Geobacter sp. (strain M21), this protein is LexA repressor.